The following is a 308-amino-acid chain: Polyprenal reductase (308 aa).

The Cytoplasmic segment spans residues 1–2 (MT). A helical transmembrane segment spans residues 3–23 (LLALVWLLLDATFLITLLWHL). At 24-65 (LQGCKSGHSLLCSVFQDLIRYGKTKTGLQRPAWLQWFDIPKR) the chain is on the lumenal side. Residues 66–86 (CFWHFYCVSLIWNGCLLWILL) form a helical membrane-spanning segment. At 87 to 120 (RLLLQSVPVPEWLQLVLHFLHAGSEPQILDRELS) the chain is on the cytoplasmic side. The chain crosses the membrane as a helical span at residues 121 to 141 (VILALALLWLHSLRRLLECLF). Residues 142-148 (VSVFSNG) are Lumenal-facing. The chain crosses the membrane as a helical span at residues 149 to 169 (VIHLVQYCFGLGYYFLIGITV). Topologically, residues 170-184 (LTYCPLDRRTVSTDN) are cytoplasmic. A helical membrane pass occupies residues 185–205 (LLTQCHWYHILGLALYIWASL). At 206–255 (HQYRCHCILAGLRKSASGNVINLNHSVPCGDWFERVSCPHYFAELLIYVS) the chain is on the lumenal side. The helical transmembrane segment at 256 to 276 (IAVVFGLLNTIWWLVVLYVLL) threads the bilayer. At 277–308 (NQALAALLCHEFYHEKFDTYPIHRKAFIPFIF) the chain is on the cytoplasmic side.

Belongs to the steroid 5-alpha reductase family. Polyprenal reductase subfamily.

The protein resides in the endoplasmic reticulum membrane. It catalyses the reaction a di-trans,poly-cis-dolichal + NADP(+) = a di-trans,poly-cis-polyprenal + NADPH + H(+). The catalysed reaction is a 3-oxo-5alpha-steroid + NADP(+) = a 3-oxo-Delta(4)-steroid + NADPH + H(+). It carries out the reaction androst-4-ene-3,17-dione + NADPH + H(+) = 5alpha-androstan-3,17-dione + NADP(+). The enzyme catalyses 17beta-hydroxy-5alpha-androstan-3-one + NADP(+) = testosterone + NADPH + H(+). Its pathway is protein modification; protein glycosylation. Its function is as follows. Plays a key role in early steps of protein N-linked glycosylation by being involved in the conversion of polyprenol into dolichol. Acts as a polyprenal reductase that mediates the reduction of polyprenal into dolichal in a NADP-dependent mechanism. Dolichols are required for the synthesis of dolichol-linked monosaccharides and the oligosaccharide precursor used for N-glycosylation. Also able to convert testosterone (T) into 5-alpha-dihydrotestosterone (DHT). The polypeptide is Polyprenal reductase (srd5a3) (Xenopus tropicalis (Western clawed frog)).